The primary structure comprises 353 residues: Methylthioribose-1-phosphate isomerase (353 aa).

Substrate contacts are provided by residues 51–53, Arg-94, and Gln-199; that span reads RGA. Catalysis depends on Asp-240, which acts as the Proton donor. 250 to 251 contributes to the substrate binding site; the sequence is NK.

It belongs to the EIF-2B alpha/beta/delta subunits family. MtnA subfamily. As to quaternary structure, homodimer.

It carries out the reaction 5-(methylsulfanyl)-alpha-D-ribose 1-phosphate = 5-(methylsulfanyl)-D-ribulose 1-phosphate. It participates in amino-acid biosynthesis; L-methionine biosynthesis via salvage pathway; L-methionine from S-methyl-5-thio-alpha-D-ribose 1-phosphate: step 1/6. Catalyzes the interconversion of methylthioribose-1-phosphate (MTR-1-P) into methylthioribulose-1-phosphate (MTRu-1-P). The chain is Methylthioribose-1-phosphate isomerase from Bacillus cereus (strain ATCC 14579 / DSM 31 / CCUG 7414 / JCM 2152 / NBRC 15305 / NCIMB 9373 / NCTC 2599 / NRRL B-3711).